Reading from the N-terminus, the 330-residue chain is Methionyl-tRNA formyltransferase (330 aa).

Residue 112 to 115 participates in (6S)-5,6,7,8-tetrahydrofolate binding; it reads SLLP.

Belongs to the Fmt family.

The enzyme catalyses L-methionyl-tRNA(fMet) + (6R)-10-formyltetrahydrofolate = N-formyl-L-methionyl-tRNA(fMet) + (6S)-5,6,7,8-tetrahydrofolate + H(+). Functionally, attaches a formyl group to the free amino group of methionyl-tRNA(fMet). The formyl group appears to play a dual role in the initiator identity of N-formylmethionyl-tRNA by promoting its recognition by IF2 and preventing the misappropriation of this tRNA by the elongation apparatus. This is Methionyl-tRNA formyltransferase from Synechococcus sp. (strain RCC307).